The following is a 202-amino-acid chain: Mevalonate-3-phosphate 5-kinase (202 aa).

The catalysed reaction is (R)-3-phosphomevalonate + ATP = (R)-3,5-bisphosphomevalonate + ADP + H(+). It participates in isoprenoid biosynthesis; isopentenyl diphosphate biosynthesis via mevalonate pathway. In terms of biological role, phosphorylates mevalonate 3-phosphate to form mevalonate 3,5-bisphosphate. Functions in an alternative mevalonate pathway, only present in extreme acidophiles of the Thermoplasmatales order, which passes through mevalonate 3-phosphate rather than mevalonate 5-phosphate. The protein is Mevalonate-3-phosphate 5-kinase of Thermoplasma acidophilum (strain ATCC 25905 / DSM 1728 / JCM 9062 / NBRC 15155 / AMRC-C165).